Here is a 788-residue protein sequence, read N- to C-terminus: Protein HHLF1 (788 aa).

3 disordered regions span residues 1-82 (MAQR…NFWH), 366-385 (TGTA…ETEA), and 609-663 (IHKK…SRLP). A compositionally biased stretch (gly residues) spans 16-25 (RGRGAGGPSG). Residues 26-56 (VGSSPPSSCVPMGAPSTAGTGASAAATTTPG) show a composition bias toward low complexity. Residues 74–248 (SGNNSNFWHG…HGAGEVVRLY (175 aa)) form an RNA-binding region. Basic and acidic residues predominate over residues 650-659 (LRRDDEDWKP). Residues 671–788 (LDETFWVLGS…IATHYHYNAQ (118 aa)) form an interaction with host EIF2AK2/PKR region.

The protein belongs to the herpesviridae US22 family. As to quaternary structure, interacts with host EIF2AK2/PKR; this interaction retains EIF2AK2 to the host nucleus and prevents its activation. Interaction (via N-terminus) with host BECN1; this interaction inhibits host autophagy. Interacts with the viral DNA polymerase accessory subunit UL44. Interacts with host HSPA5.

The protein resides in the virion. Its subcellular location is the host cytoplasm. The protein localises to the host nucleus. Functionally, inhibits the establishment of the antiviral state and the integrated stress response (ISR) in the infected cell. Prevents the phosphorylation of the host eukaryotic translation initiation factor eIF-2alpha/EIF2S1 and thus the shutoff of viral and cellular protein synthesis by directly interacting with EIF2AK2/PKR. Prevents stress granule formation in response to eIF-2alpha/EIF2S1 phosphorylation, thereby rescuing viral replication and protein synthesis. Also inhibits host autophagy by interacting with host Beclin-1/BECN1. This chain is Protein HHLF1 (TRS1), found in Homo sapiens (Human).